The primary structure comprises 208 residues: ATP-dependent Clp protease proteolytic subunit (208 aa).

Ser-106 acts as the Nucleophile in catalysis. His-131 is an active-site residue.

It belongs to the peptidase S14 family. In terms of assembly, fourteen ClpP subunits assemble into 2 heptameric rings which stack back to back to give a disk-like structure with a central cavity, resembling the structure of eukaryotic proteasomes.

It is found in the cytoplasm. The catalysed reaction is Hydrolysis of proteins to small peptides in the presence of ATP and magnesium. alpha-casein is the usual test substrate. In the absence of ATP, only oligopeptides shorter than five residues are hydrolyzed (such as succinyl-Leu-Tyr-|-NHMec, and Leu-Tyr-Leu-|-Tyr-Trp, in which cleavage of the -Tyr-|-Leu- and -Tyr-|-Trp bonds also occurs).. In terms of biological role, cleaves peptides in various proteins in a process that requires ATP hydrolysis. Has a chymotrypsin-like activity. Plays a major role in the degradation of misfolded proteins. This chain is ATP-dependent Clp protease proteolytic subunit, found in Caulobacter sp. (strain K31).